The primary structure comprises 323 residues: Methionyl-tRNA formyltransferase (323 aa).

Position 117–120 (Ser117–Pro120) interacts with (6S)-5,6,7,8-tetrahydrofolate.

The protein belongs to the Fmt family.

The enzyme catalyses L-methionyl-tRNA(fMet) + (6R)-10-formyltetrahydrofolate = N-formyl-L-methionyl-tRNA(fMet) + (6S)-5,6,7,8-tetrahydrofolate + H(+). Its function is as follows. Attaches a formyl group to the free amino group of methionyl-tRNA(fMet). The formyl group appears to play a dual role in the initiator identity of N-formylmethionyl-tRNA by promoting its recognition by IF2 and preventing the misappropriation of this tRNA by the elongation apparatus. This Albidiferax ferrireducens (strain ATCC BAA-621 / DSM 15236 / T118) (Rhodoferax ferrireducens) protein is Methionyl-tRNA formyltransferase.